We begin with the raw amino-acid sequence, 378 residues long: Queuine tRNA-ribosyltransferase (378 aa).

Aspartate 93 (proton acceptor) is an active-site residue. Substrate contacts are provided by residues 93–97 (DSGGF), aspartate 147, glutamine 189, and glycine 216. Residues 247-253 (GVGTFRE) form an RNA binding region. Catalysis depends on aspartate 266, which acts as the Nucleophile. Positions 271–275 (TRVAR) are RNA binding; important for wobble base 34 recognition. Cysteine 308, cysteine 310, cysteine 313, and histidine 339 together coordinate Zn(2+).

The protein belongs to the queuine tRNA-ribosyltransferase family. In terms of assembly, homodimer. Within each dimer, one monomer is responsible for RNA recognition and catalysis, while the other monomer binds to the replacement base PreQ1. The cofactor is Zn(2+).

It carries out the reaction 7-aminomethyl-7-carbaguanine + guanosine(34) in tRNA = 7-aminomethyl-7-carbaguanosine(34) in tRNA + guanine. Its pathway is tRNA modification; tRNA-queuosine biosynthesis. Its function is as follows. Catalyzes the base-exchange of a guanine (G) residue with the queuine precursor 7-aminomethyl-7-deazaguanine (PreQ1) at position 34 (anticodon wobble position) in tRNAs with GU(N) anticodons (tRNA-Asp, -Asn, -His and -Tyr). Catalysis occurs through a double-displacement mechanism. The nucleophile active site attacks the C1' of nucleotide 34 to detach the guanine base from the RNA, forming a covalent enzyme-RNA intermediate. The proton acceptor active site deprotonates the incoming PreQ1, allowing a nucleophilic attack on the C1' of the ribose to form the product. After dissociation, two additional enzymatic reactions on the tRNA convert PreQ1 to queuine (Q), resulting in the hypermodified nucleoside queuosine (7-(((4,5-cis-dihydroxy-2-cyclopenten-1-yl)amino)methyl)-7-deazaguanosine). This Gloeobacter violaceus (strain ATCC 29082 / PCC 7421) protein is Queuine tRNA-ribosyltransferase.